Consider the following 188-residue polypeptide: Elongation factor P (188 aa).

Lys-34 carries the N6-(3,6-diaminohexanoyl)-5-hydroxylysine modification.

This sequence belongs to the elongation factor P family. Post-translationally, may be beta-lysylated on the epsilon-amino group of Lys-34 by the combined action of EpmA and EpmB, and then hydroxylated on the C5 position of the same residue by EpmC (if this protein is present). Lysylation is critical for the stimulatory effect of EF-P on peptide-bond formation. The lysylation moiety may extend toward the peptidyltransferase center and stabilize the terminal 3-CCA end of the tRNA. Hydroxylation of the C5 position on Lys-34 may allow additional potential stabilizing hydrogen-bond interactions with the P-tRNA.

It localises to the cytoplasm. It functions in the pathway protein biosynthesis; polypeptide chain elongation. Involved in peptide bond synthesis. Alleviates ribosome stalling that occurs when 3 or more consecutive Pro residues or the sequence PPG is present in a protein, possibly by augmenting the peptidyl transferase activity of the ribosome. Modification of Lys-34 is required for alleviation. This is Elongation factor P from Enterobacter sp. (strain 638).